Here is a 109-residue protein sequence, read N- to C-terminus: Heterogeneous nuclear ribonucleoprotein-like protein HD40 (109 aa).

The tract at residues 1 to 36 (EEVSNGQEHTEGMXQGEXNXIXVEEHHEGEKNSHLV) is disordered. Residues 23 to 36 (VEEHHEGEKNSHLV) show a composition bias toward basic and acidic residues. One can recognise an RRM domain in the interval 40–50 (EEKKLFVGALS). 2 positions are modified to asymmetric dimethylarginine: R102 and R105.

The protein localises to the cytoplasm. Its subcellular location is the nucleus. In Artemia salina (Brine shrimp), this protein is Heterogeneous nuclear ribonucleoprotein-like protein HD40.